Here is a 78-residue protein sequence, read N- to C-terminus: Short neurotoxin 342 (78 aa).

Residues 1 to 21 (MKTLLLTLVVLTIVCLDLGYT) form the signal peptide. 4 disulfide bridges follow: C24–C43, C38–C57, C59–C70, and C71–C76.

This sequence belongs to the three-finger toxin family. Short-chain subfamily. Type I alpha-neurotoxin sub-subfamily. In terms of tissue distribution, expressed by the venom gland.

Its subcellular location is the secreted. Binds to muscle nicotinic acetylcholine receptor (nAChR) and inhibit acetylcholine from binding to the receptor, thereby impairing neuromuscular transmission. This Drysdalia coronoides (White-lipped snake) protein is Short neurotoxin 342.